A 1182-amino-acid chain; its full sequence is Rho GTPase-activating protein 20 (1182 aa).

Positions 1-40 (MEAMSPQQDALGAQPGRSSSLTGMSRIAGGPGTKKKMKTL) are disordered. S46 bears the Phosphoserine mark. Positions 86 to 187 (LLIDGPVELK…SLLQRYIALE (102 aa)) constitute a PH domain. Positions 194-283 (KSIPLKIFAK…TALLTQGSKD (90 aa)) constitute a Ras-associating domain. The Rho-GAP domain occupies 365 to 551 (VSLPDICEND…FLIENCCRIF (187 aa)). 2 positions are modified to phosphoserine: S704 and S730. Disordered stretches follow at residues 744–791 (KQTQ…IQET), 932–953 (ASYS…SSQD), 981–1009 (QRKQ…GQAS), and 1140–1182 (EESG…GDRH). Positions 757-775 (FKQSSVTGTDVSKRNTANE) are enriched in polar residues. The span at 933-953 (SYSSLSSPGTSPSGSSVSSQD) shows a compositional bias: low complexity.

Highest expression is found in testis. Ubiquitously expressed in extragonadal tissues.

GTPase activator for the Rho-type GTPases by converting them to an inactive GDP-bound state. The protein is Rho GTPase-activating protein 20 (Arhgap20) of Rattus norvegicus (Rat).